We begin with the raw amino-acid sequence, 64 residues long: Toxin BmCa-1 (64 aa).

Positions 1-18 (MNTFVVVFLLLTAILCHA) are cleaved as a signal peptide. Positions 19–27 (EHALDETAR) are excised as a propeptide. 3 disulfide bridges follow: Cys29-Cys43, Cys36-Cys49, and Cys42-Cys58.

Belongs to the scorpion calcin-like family. In terms of tissue distribution, expressed by the venom gland.

Its subcellular location is the secreted. May increase intracellular calcium release through the activation of nuclear inositol 1,4,5-trisphosphate receptors (ITPR) of cardiomyocytes, thereby causing an increase in the contraction frequency of these cells. The sequence is that of Toxin BmCa-1 from Olivierus martensii (Manchurian scorpion).